Consider the following 209-residue polypeptide: Orotate phosphoribosyltransferase (209 aa).

5-phospho-alpha-D-ribose 1-diphosphate is bound by residues R96, K100, H102, and E122–S130. S126 contacts orotate.

This sequence belongs to the purine/pyrimidine phosphoribosyltransferase family. PyrE subfamily. As to quaternary structure, homodimer. Requires Mg(2+) as cofactor.

The enzyme catalyses orotidine 5'-phosphate + diphosphate = orotate + 5-phospho-alpha-D-ribose 1-diphosphate. Its pathway is pyrimidine metabolism; UMP biosynthesis via de novo pathway; UMP from orotate: step 1/2. In terms of biological role, catalyzes the transfer of a ribosyl phosphate group from 5-phosphoribose 1-diphosphate to orotate, leading to the formation of orotidine monophosphate (OMP). This is Orotate phosphoribosyltransferase from Streptococcus agalactiae serotype Ia (strain ATCC 27591 / A909 / CDC SS700).